Here is a 321-residue protein sequence, read N- to C-terminus: Glyoxylate/hydroxypyruvate reductase B (321 aa).

Catalysis depends on residues R237 and E266. H285 functions as the Proton donor in the catalytic mechanism.

Belongs to the D-isomer specific 2-hydroxyacid dehydrogenase family. GhrB subfamily. Homodimer.

It localises to the cytoplasm. The catalysed reaction is glycolate + NADP(+) = glyoxylate + NADPH + H(+). It carries out the reaction (R)-glycerate + NAD(+) = 3-hydroxypyruvate + NADH + H(+). The enzyme catalyses (R)-glycerate + NADP(+) = 3-hydroxypyruvate + NADPH + H(+). In terms of biological role, catalyzes the NADPH-dependent reduction of glyoxylate and hydroxypyruvate into glycolate and glycerate, respectively. The polypeptide is Glyoxylate/hydroxypyruvate reductase B (Erwinia tasmaniensis (strain DSM 17950 / CFBP 7177 / CIP 109463 / NCPPB 4357 / Et1/99)).